A 235-amino-acid chain; its full sequence is Clathrin light chain A (235 aa).

The disordered stretch occupies residues 1–32 (MAELDPFGAPAGAPGGPALGNGVAGAGEEDPA). Positions 13–25 (APGGPALGNGVAG) are enriched in gly residues. Residues 99 to 161 (VDRLQSEPES…QLQKTKANNR (63 aa)) are involved in binding clathrin heavy chain. A phosphoserine mark is found at serine 104 and serine 193. Lysine 210 carries the N6-acetyllysine modification. At serine 223 the chain carries Phosphoserine. Lysine 229 is subject to N6-acetyllysine.

Belongs to the clathrin light chain family. As to quaternary structure, clathrin coats are formed from molecules containing 3 heavy chains and 3 light chains. Interacts with CALY; the interaction stimulates clathrin self-assembly and clathrin-mediated endocytosis. Interacts with CKAP5 and TACC3 forming the TACC3/ch-TOG/clathrin complex located at spindle inter-microtubules bridges; the complex implicates clathrin triskelions.

Its subcellular location is the cytoplasmic vesicle membrane. The protein resides in the membrane. It is found in the coated pit. It localises to the cytoplasm. The protein localises to the cytoskeleton. Its subcellular location is the spindle. Clathrin is the major protein of the polyhedral coat of coated pits and vesicles. Acts as a component of the TACC3/ch-TOG/clathrin complex proposed to contribute to stabilization of kinetochore fibers of the mitotic spindle by acting as inter-microtubule bridge. In Mus musculus (Mouse), this protein is Clathrin light chain A (Clta).